The chain runs to 160 residues: Phosphopantetheine adenylyltransferase (160 aa).

Thr-10 contacts substrate. ATP is bound by residues 10–11 (TF) and His-18. Substrate is bound by residues Lys-42, Leu-74, and Arg-88. Residues 89 to 91 (GLR), Glu-99, and 124 to 130 (NSFISST) each bind ATP.

It belongs to the bacterial CoaD family. In terms of assembly, homohexamer. Requires Mg(2+) as cofactor.

Its subcellular location is the cytoplasm. The enzyme catalyses (R)-4'-phosphopantetheine + ATP + H(+) = 3'-dephospho-CoA + diphosphate. It participates in cofactor biosynthesis; coenzyme A biosynthesis; CoA from (R)-pantothenate: step 4/5. In terms of biological role, reversibly transfers an adenylyl group from ATP to 4'-phosphopantetheine, yielding dephospho-CoA (dPCoA) and pyrophosphate. This Aeromonas salmonicida (strain A449) protein is Phosphopantetheine adenylyltransferase.